Here is a 110-residue protein sequence, read N- to C-terminus: Eukaryotic translation initiation factor eIF1 (110 aa).

A Phosphothreonine modification is found at Thr40.

The protein belongs to the SUI1 family.

Its function is as follows. Probably involved in translation. The polypeptide is Eukaryotic translation initiation factor eIF1 (Drosophila melanogaster (Fruit fly)).